The following is a 264-amino-acid chain: Thymidylate synthase (264 aa).

R21 serves as a coordination point for dUMP. Position 51 (H51) interacts with (6R)-5,10-methylene-5,6,7,8-tetrahydrofolate. 126 to 127 serves as a coordination point for dUMP; that stretch reads RR. The active-site Nucleophile is the C146. DUMP-binding positions include 166-169, N177, and 207-209; these read RSCD and HLY. A (6R)-5,10-methylene-5,6,7,8-tetrahydrofolate-binding site is contributed by D169. A263 provides a ligand contact to (6R)-5,10-methylene-5,6,7,8-tetrahydrofolate.

The protein belongs to the thymidylate synthase family. Bacterial-type ThyA subfamily. As to quaternary structure, homodimer.

The protein localises to the cytoplasm. The catalysed reaction is dUMP + (6R)-5,10-methylene-5,6,7,8-tetrahydrofolate = 7,8-dihydrofolate + dTMP. It functions in the pathway pyrimidine metabolism; dTTP biosynthesis. Catalyzes the reductive methylation of 2'-deoxyuridine-5'-monophosphate (dUMP) to 2'-deoxythymidine-5'-monophosphate (dTMP) while utilizing 5,10-methylenetetrahydrofolate (mTHF) as the methyl donor and reductant in the reaction, yielding dihydrofolate (DHF) as a by-product. This enzymatic reaction provides an intracellular de novo source of dTMP, an essential precursor for DNA biosynthesis. This is Thymidylate synthase from Shigella boydii serotype 4 (strain Sb227).